The chain runs to 477 residues: Adenosylhomocysteinase (477 aa).

Substrate contacts are provided by Thr-63, Asp-142, and Glu-202. An NAD(+)-binding site is contributed by 203 to 205 (TTT). 2 residues coordinate substrate: Lys-232 and Asp-236. NAD(+)-binding positions include Asn-237, 266–271 (GYGDVG), Glu-289, Asn-324, 345–347 (IGH), and Asn-390.

The protein belongs to the adenosylhomocysteinase family. Requires NAD(+) as cofactor.

Its subcellular location is the cytoplasm. The catalysed reaction is S-adenosyl-L-homocysteine + H2O = L-homocysteine + adenosine. It participates in amino-acid biosynthesis; L-homocysteine biosynthesis; L-homocysteine from S-adenosyl-L-homocysteine: step 1/1. Its function is as follows. May play a key role in the regulation of the intracellular concentration of adenosylhomocysteine. This chain is Adenosylhomocysteinase, found in Leptothrix cholodnii (strain ATCC 51168 / LMG 8142 / SP-6) (Leptothrix discophora (strain SP-6)).